Here is a 415-residue protein sequence, read N- to C-terminus: Probable tRNA pseudouridine synthase D (415 aa).

Aspartate 83 (nucleophile) is an active-site residue. The 221-residue stretch at 158–378 (GFPNYFGYQR…PGRRRELLIR (221 aa)) folds into the TRUD domain.

It belongs to the pseudouridine synthase TruD family.

The catalysed reaction is uridine(13) in tRNA = pseudouridine(13) in tRNA. Functionally, could be responsible for synthesis of pseudouridine from uracil-13 in transfer RNAs. In Thermococcus gammatolerans (strain DSM 15229 / JCM 11827 / EJ3), this protein is Probable tRNA pseudouridine synthase D.